Here is a 395-residue protein sequence, read N- to C-terminus: Succinate--CoA ligase [ADP-forming] subunit beta (395 aa).

The ATP-grasp domain occupies 9 to 240 (RDVFEKHGVP…AASADPLEAK (232 aa)). ATP-binding positions include Lys49, 56–58 (GRG), Ala98, and Glu103. Positions 195 and 209 each coordinate Mg(2+). Substrate-binding positions include Asn260 and 322 to 324 (GIT).

This sequence belongs to the succinate/malate CoA ligase beta subunit family. Heterotetramer of two alpha and two beta subunits. Mg(2+) serves as cofactor.

It catalyses the reaction succinate + ATP + CoA = succinyl-CoA + ADP + phosphate. It carries out the reaction GTP + succinate + CoA = succinyl-CoA + GDP + phosphate. Its pathway is carbohydrate metabolism; tricarboxylic acid cycle; succinate from succinyl-CoA (ligase route): step 1/1. Its function is as follows. Succinyl-CoA synthetase functions in the citric acid cycle (TCA), coupling the hydrolysis of succinyl-CoA to the synthesis of either ATP or GTP and thus represents the only step of substrate-level phosphorylation in the TCA. The beta subunit provides nucleotide specificity of the enzyme and binds the substrate succinate, while the binding sites for coenzyme A and phosphate are found in the alpha subunit. This Beutenbergia cavernae (strain ATCC BAA-8 / DSM 12333 / CCUG 43141 / JCM 11478 / NBRC 16432 / NCIMB 13614 / HKI 0122) protein is Succinate--CoA ligase [ADP-forming] subunit beta.